A 159-amino-acid polypeptide reads, in one-letter code: ATP synthase subunit b (159 aa).

A helical transmembrane segment spans residues 2–22; it reads NISIPQIIAAILNFIILLLIV.

The protein belongs to the ATPase B chain family. In terms of assembly, F-type ATPases have 2 components, F(1) - the catalytic core - and F(0) - the membrane proton channel. F(1) has five subunits: alpha(3), beta(3), gamma(1), delta(1), epsilon(1). F(0) has three main subunits: a(1), b(2) and c(10-14). The alpha and beta chains form an alternating ring which encloses part of the gamma chain. F(1) is attached to F(0) by a central stalk formed by the gamma and epsilon chains, while a peripheral stalk is formed by the delta and b chains.

Its subcellular location is the cell membrane. F(1)F(0) ATP synthase produces ATP from ADP in the presence of a proton or sodium gradient. F-type ATPases consist of two structural domains, F(1) containing the extramembraneous catalytic core and F(0) containing the membrane proton channel, linked together by a central stalk and a peripheral stalk. During catalysis, ATP synthesis in the catalytic domain of F(1) is coupled via a rotary mechanism of the central stalk subunits to proton translocation. In terms of biological role, component of the F(0) channel, it forms part of the peripheral stalk, linking F(1) to F(0). The polypeptide is ATP synthase subunit b (Clostridium botulinum (strain Okra / Type B1)).